A 140-amino-acid polypeptide reads, in one-letter code: Active regulator of SIRT1 (140 aa).

Disordered stretches follow at residues 1-52 and 95-123; these read MSAS…KNKA and QQVL…EGTV. Over residues 108–120 the composition is skewed to basic and acidic residues; that stretch reads DRPAEKKEKKKPE.

This sequence belongs to the AROS family. As to quaternary structure, part of the small subunit (SSU) processome, composed of more than 70 proteins and the RNA chaperone small nucleolar RNA (snoRNA) U3.

It is found in the nucleus. The protein resides in the nucleolus. Part of the small subunit (SSU) processome, first precursor of the small eukaryotic ribosomal subunit. During the assembly of the SSU processome in the nucleolus, many ribosome biogenesis factors, an RNA chaperone and ribosomal proteins associate with the nascent pre-rRNA and work in concert to generate RNA folding, modifications, rearrangements and cleavage as well as targeted degradation of pre-ribosomal RNA by the RNA exosome. Acts as a chaperone that specifically mediates the integration of RPS19 in state post-A1. Direct regulator of SIRT1. The sequence is that of Active regulator of SIRT1 (RPS19BP1) from Gallus gallus (Chicken).